A 625-amino-acid chain; its full sequence is 1-deoxy-D-xylulose-5-phosphate synthase (625 aa).

Thiamine diphosphate is bound by residues His80 and 121–123 (GHS). Residue Asp152 participates in Mg(2+) binding. Residues 153-154 (GA), Asn181, Tyr288, and Glu370 contribute to the thiamine diphosphate site. Asn181 lines the Mg(2+) pocket.

This sequence belongs to the transketolase family. DXPS subfamily. In terms of assembly, homodimer. The cofactor is Mg(2+). Thiamine diphosphate serves as cofactor.

The enzyme catalyses D-glyceraldehyde 3-phosphate + pyruvate + H(+) = 1-deoxy-D-xylulose 5-phosphate + CO2. Its pathway is metabolic intermediate biosynthesis; 1-deoxy-D-xylulose 5-phosphate biosynthesis; 1-deoxy-D-xylulose 5-phosphate from D-glyceraldehyde 3-phosphate and pyruvate: step 1/1. Its function is as follows. Catalyzes the acyloin condensation reaction between C atoms 2 and 3 of pyruvate and glyceraldehyde 3-phosphate to yield 1-deoxy-D-xylulose-5-phosphate (DXP). This is 1-deoxy-D-xylulose-5-phosphate synthase from Alteromonas mediterranea (strain DSM 17117 / CIP 110805 / LMG 28347 / Deep ecotype).